The sequence spans 438 residues: Phosphoribosylamine--glycine ligase (438 aa).

The region spanning Arg-108–Glu-316 is the ATP-grasp domain. Ile-135 to Thr-194 provides a ligand contact to ATP. Residues Gln-274, Glu-286, and Asn-288 each coordinate Mg(2+). The Mn(2+) site is built by Gln-274, Glu-286, and Asn-288.

Belongs to the GARS family. It depends on Mg(2+) as a cofactor. Mn(2+) serves as cofactor.

It catalyses the reaction 5-phospho-beta-D-ribosylamine + glycine + ATP = N(1)-(5-phospho-beta-D-ribosyl)glycinamide + ADP + phosphate + H(+). Its pathway is purine metabolism; IMP biosynthesis via de novo pathway; N(1)-(5-phospho-D-ribosyl)glycinamide from 5-phospho-alpha-D-ribose 1-diphosphate: step 2/2. The sequence is that of Phosphoribosylamine--glycine ligase from Pyrococcus horikoshii (strain ATCC 700860 / DSM 12428 / JCM 9974 / NBRC 100139 / OT-3).